Reading from the N-terminus, the 209-residue chain is MGNGMNKILPSLFIGNFKDARDVEQLHKNNITHILSIHDSARPMLEGMKYLCIPASDSPSQNLIQHFKDSIAFIHECRLKGEGCLVHCLAGVSRSVTLVVAYVMTVTDFGWEDALSAVRGARTCANPNMGFQKQLEDFGKHDVYQFRTWLKETYGENPFNDKDDAKQLLDKHKQQEAAESQSATSSGRQWSSHLTSLSSMSYSNYTTET.

Positions 4–144 (GMNKILPSLF…LEDFGKHDVY (141 aa)) constitute a Tyrosine-protein phosphatase domain. The active-site Phosphocysteine intermediate is the Cys88. A disordered region spans residues 170-193 (DKHKQQEAAESQSATSSGRQWSSH). Residues 177-193 (AAESQSATSSGRQWSSH) are compositionally biased toward low complexity.

Belongs to the protein-tyrosine phosphatase family. Non-receptor class dual specificity subfamily.

The protein resides in the cytoplasm. Its subcellular location is the nucleus. It carries out the reaction O-phospho-L-tyrosyl-[protein] + H2O = L-tyrosyl-[protein] + phosphate. It catalyses the reaction O-phospho-L-seryl-[protein] + H2O = L-seryl-[protein] + phosphate. The catalysed reaction is O-phospho-L-threonyl-[protein] + H2O = L-threonyl-[protein] + phosphate. In terms of biological role, activates the Jnk signaling pathway. Dephosphorylates and deactivates p38 and stress-activated protein kinase/c-Jun N-terminal kinase (SAPK/JNK). This chain is Dual specificity protein phosphatase 22 (dusp22), found in Xenopus tropicalis (Western clawed frog).